The primary structure comprises 142 residues: MRALLGICVLALVTPAVLGRTMDRCSLAREMANMGVSRDQLSKWACIAEHESSYRTGVVGPPNTDGSNDYGIFQINDMYWCQPSSGKFSHNGCDVSCNALLTDDIKSSVRCALKVLGQQGWSAWSTWHYCSGYLPPIDDCFV.

Residues 1-19 (MRALLGICVLALVTPAVLG) form the signal peptide. The C-type lysozyme domain occupies 20–142 (RTMDRCSLAR…YLPPIDDCFV (123 aa)). 4 cysteine pairs are disulfide-bonded: Cys-25/Cys-140, Cys-46/Cys-130, Cys-81/Cys-97, and Cys-93/Cys-111. Active-site residues include Glu-51 and Asp-69.

The protein belongs to the glycosyl hydrolase 22 family. Found in the midgut.

It catalyses the reaction Hydrolysis of (1-&gt;4)-beta-linkages between N-acetylmuramic acid and N-acetyl-D-glucosamine residues in a peptidoglycan and between N-acetyl-D-glucosamine residues in chitodextrins.. Unlikely to play an active role in the humoral immune defense. May have a function in the digestion of bacteria in the food. May be involved in the clearance of bacteria from the larval gut before metamorphosis. The sequence is that of Lysozyme X (LysX) from Drosophila melanogaster (Fruit fly).